The sequence spans 415 residues: Serine hydroxymethyltransferase (415 aa).

(6S)-5,6,7,8-tetrahydrofolate is bound by residues L117 and 121-123; that span reads GHL. Residue K226 is modified to N6-(pyridoxal phosphate)lysine. Residue E241 participates in (6S)-5,6,7,8-tetrahydrofolate binding.

It belongs to the SHMT family. As to quaternary structure, homodimer. The cofactor is pyridoxal 5'-phosphate.

It is found in the cytoplasm. It catalyses the reaction (6R)-5,10-methylene-5,6,7,8-tetrahydrofolate + glycine + H2O = (6S)-5,6,7,8-tetrahydrofolate + L-serine. The protein operates within one-carbon metabolism; tetrahydrofolate interconversion. Its pathway is amino-acid biosynthesis; glycine biosynthesis; glycine from L-serine: step 1/1. Catalyzes the reversible interconversion of serine and glycine with tetrahydrofolate (THF) serving as the one-carbon carrier. This reaction serves as the major source of one-carbon groups required for the biosynthesis of purines, thymidylate, methionine, and other important biomolecules. Also exhibits THF-independent aldolase activity toward beta-hydroxyamino acids, producing glycine and aldehydes, via a retro-aldol mechanism. The protein is Serine hydroxymethyltransferase of Bacillus subtilis (strain 168).